The following is a 286-amino-acid chain: Phosphatidylserine decarboxylase proenzyme (286 aa).

Active-site charge relay system; for autoendoproteolytic cleavage activity residues include Asp-90, His-147, and Ser-250. Ser-250 (schiff-base intermediate with substrate; via pyruvic acid; for decarboxylase activity) is an active-site residue. Ser-250 is subject to Pyruvic acid (Ser); by autocatalysis.

The protein belongs to the phosphatidylserine decarboxylase family. PSD-B subfamily. Prokaryotic type I sub-subfamily. In terms of assembly, heterodimer of a large membrane-associated beta subunit and a small pyruvoyl-containing alpha subunit. The cofactor is pyruvate. Is synthesized initially as an inactive proenzyme. Formation of the active enzyme involves a self-maturation process in which the active site pyruvoyl group is generated from an internal serine residue via an autocatalytic post-translational modification. Two non-identical subunits are generated from the proenzyme in this reaction, and the pyruvate is formed at the N-terminus of the alpha chain, which is derived from the carboxyl end of the proenzyme. The autoendoproteolytic cleavage occurs by a canonical serine protease mechanism, in which the side chain hydroxyl group of the serine supplies its oxygen atom to form the C-terminus of the beta chain, while the remainder of the serine residue undergoes an oxidative deamination to produce ammonia and the pyruvoyl prosthetic group on the alpha chain. During this reaction, the Ser that is part of the protease active site of the proenzyme becomes the pyruvoyl prosthetic group, which constitutes an essential element of the active site of the mature decarboxylase.

The protein resides in the cell membrane. The enzyme catalyses a 1,2-diacyl-sn-glycero-3-phospho-L-serine + H(+) = a 1,2-diacyl-sn-glycero-3-phosphoethanolamine + CO2. It functions in the pathway phospholipid metabolism; phosphatidylethanolamine biosynthesis; phosphatidylethanolamine from CDP-diacylglycerol: step 2/2. Catalyzes the formation of phosphatidylethanolamine (PtdEtn) from phosphatidylserine (PtdSer). The sequence is that of Phosphatidylserine decarboxylase proenzyme from Saccharophagus degradans (strain 2-40 / ATCC 43961 / DSM 17024).